Consider the following 354-residue polypeptide: Type II restriction enzyme BanI (354 aa).

In terms of assembly, homodimer.

The catalysed reaction is Endonucleolytic cleavage of DNA to give specific double-stranded fragments with terminal 5'-phosphates.. In terms of biological role, a P subtype restriction enzyme that recognizes the double-stranded sequence 5'-GGYRCC-3' and cleaves after G-1. This chain is Type II restriction enzyme BanI (banIR), found in Aneurinibacillus aneurinilyticus (Bacillus aneurinolyticus).